We begin with the raw amino-acid sequence, 349 residues long: Phosphoribosylformylglycinamidine cyclo-ligase (349 aa).

It belongs to the AIR synthase family.

The protein resides in the cytoplasm. It carries out the reaction 2-formamido-N(1)-(5-O-phospho-beta-D-ribosyl)acetamidine + ATP = 5-amino-1-(5-phospho-beta-D-ribosyl)imidazole + ADP + phosphate + H(+). It functions in the pathway purine metabolism; IMP biosynthesis via de novo pathway; 5-amino-1-(5-phospho-D-ribosyl)imidazole from N(2)-formyl-N(1)-(5-phospho-D-ribosyl)glycinamide: step 2/2. The sequence is that of Phosphoribosylformylglycinamidine cyclo-ligase from Bordetella parapertussis (strain 12822 / ATCC BAA-587 / NCTC 13253).